Reading from the N-terminus, the 389-residue chain is NADH-quinone oxidoreductase subunit D (389 aa).

It belongs to the complex I 49 kDa subunit family. As to quaternary structure, NDH-1 is composed of 14 different subunits. Subunits NuoB, C, D, E, F, and G constitute the peripheral sector of the complex.

Its subcellular location is the cell inner membrane. It carries out the reaction a quinone + NADH + 5 H(+)(in) = a quinol + NAD(+) + 4 H(+)(out). NDH-1 shuttles electrons from NADH, via FMN and iron-sulfur (Fe-S) centers, to quinones in the respiratory chain. The immediate electron acceptor for the enzyme in this species is believed to be ubiquinone. Couples the redox reaction to proton translocation (for every two electrons transferred, four hydrogen ions are translocated across the cytoplasmic membrane), and thus conserves the redox energy in a proton gradient. The sequence is that of NADH-quinone oxidoreductase subunit D from Citrifermentans bemidjiense (strain ATCC BAA-1014 / DSM 16622 / JCM 12645 / Bem) (Geobacter bemidjiensis).